The sequence spans 258 residues: Synaptosomal-associated protein 29 (258 aa).

Positions 1–41 (MSAYPKSYNPFDDDGEDEGARPAPWRDARDLPDGPDAPADR) are disordered. Basic and acidic residues predominate over residues 18–32 (EGARPAPWRDARDLP). The stretch at 76–107 (ASSEELARQRGVLERTEKMVDKMDQDLKISQK) forms a coiled coil. Phosphoserine is present on residues S77, S78, and S114. Residues T130 and T137 each carry the phosphothreonine modification. Positions 150 to 191 (ISTSKEQEAKYQASHPNLRKLDDTDPVPRGAGSAMSTDAYPK) are disordered. A phosphoserine mark is found at S163, S182, S185, S204, and S210. In terms of domain architecture, t-SNARE coiled-coil homology spans 196–258 (RAYHQKIDSN…KSTERKVRQL (63 aa)).

The protein belongs to the SNAP-25 family. As to quaternary structure, forms a SNARE complex, composed of VAMP8, SNAP29 and STX17, involved in fusion of autophagosome with lysosome. Interacts with multiple syntaxins including STX6. Interacts with EIPR1. Interacts with STX17; this interaction is increased in the absence of TMEM39A. In terms of assembly, (Microbial infection) Interacts with Hantaan hantavirus nucleoprotein; this interaction prevents the breakdown of the viral glycoprotein N by virus-triggered autophagy. (Microbial infection) The interaction with STX17 is decreased in presence of SARS coronavirus-2/SARS-CoV-2 ORF3A protein. In terms of tissue distribution, found in brain, heart, kidney, liver, lung, placenta, skeletal muscle, spleen and pancreas.

Its subcellular location is the cytoplasm. It is found in the golgi apparatus membrane. The protein resides in the cytoplasmic vesicle. The protein localises to the autophagosome membrane. It localises to the cell projection. Its subcellular location is the cilium membrane. Functionally, SNAREs, soluble N-ethylmaleimide-sensitive factor-attachment protein receptors, are essential proteins for fusion of cellular membranes. SNAREs localized on opposing membranes assemble to form a trans-SNARE complex, an extended, parallel four alpha-helical bundle that drives membrane fusion. SNAP29 is a SNARE involved in autophagy through the direct control of autophagosome membrane fusion with the lysososome membrane. Also plays a role in ciliogenesis by regulating membrane fusions. The polypeptide is Synaptosomal-associated protein 29 (Homo sapiens (Human)).